Here is a 130-residue protein sequence, read N- to C-terminus: Small ribosomal subunit protein uS11 (130 aa).

The protein belongs to the universal ribosomal protein uS11 family. As to quaternary structure, part of the 30S ribosomal subunit. Interacts with proteins S7 and S18. Binds to IF-3.

Its function is as follows. Located on the platform of the 30S subunit, it bridges several disparate RNA helices of the 16S rRNA. Forms part of the Shine-Dalgarno cleft in the 70S ribosome. This is Small ribosomal subunit protein uS11 from Xanthomonas oryzae pv. oryzae (strain MAFF 311018).